The primary structure comprises 198 residues: Probable GTP-binding protein EngB (198 aa).

An EngB-type G domain is found at 22–195; the sequence is DLPEIALAGR…WKAIHKMTKT (174 aa). Residues 30–37, 57–61, 75–78, 142–145, and 174–176 contribute to the GTP site; these read GRSNVGKS, GKTQT, DVPG, TKAD, and FSS. Residues Ser-37 and Thr-59 each contribute to the Mg(2+) site.

The protein belongs to the TRAFAC class TrmE-Era-EngA-EngB-Septin-like GTPase superfamily. EngB GTPase family. Mg(2+) is required as a cofactor.

Necessary for normal cell division and for the maintenance of normal septation. This Bacillus mycoides (strain KBAB4) (Bacillus weihenstephanensis) protein is Probable GTP-binding protein EngB.